We begin with the raw amino-acid sequence, 22 residues long: Phospholipase A2 (22 aa).

Belongs to the phospholipase A2 family. The cofactor is Ca(2+).

The protein localises to the secreted. The catalysed reaction is a 1,2-diacyl-sn-glycero-3-phosphocholine + H2O = a 1-acyl-sn-glycero-3-phosphocholine + a fatty acid + H(+). PA2 catalyzes the calcium-dependent hydrolysis of the 2-acyl groups in 3-sn-phosphoglycerides. In Struthio camelus (Common ostrich), this protein is Phospholipase A2.